A 371-amino-acid polypeptide reads, in one-letter code: UDP-N-acetylglucosamine--N-acetylmuramyl-(pentapeptide) pyrophosphoryl-undecaprenol N-acetylglucosamine transferase (371 aa).

Residues 15–17 (TGG), N126, R172, S199, I256, 275–280 (ALTVSE), and Q301 contribute to the UDP-N-acetyl-alpha-D-glucosamine site.

It belongs to the glycosyltransferase 28 family. MurG subfamily.

It is found in the cell inner membrane. It carries out the reaction di-trans,octa-cis-undecaprenyl diphospho-N-acetyl-alpha-D-muramoyl-L-alanyl-D-glutamyl-meso-2,6-diaminopimeloyl-D-alanyl-D-alanine + UDP-N-acetyl-alpha-D-glucosamine = di-trans,octa-cis-undecaprenyl diphospho-[N-acetyl-alpha-D-glucosaminyl-(1-&gt;4)]-N-acetyl-alpha-D-muramoyl-L-alanyl-D-glutamyl-meso-2,6-diaminopimeloyl-D-alanyl-D-alanine + UDP + H(+). Its pathway is cell wall biogenesis; peptidoglycan biosynthesis. In terms of biological role, cell wall formation. Catalyzes the transfer of a GlcNAc subunit on undecaprenyl-pyrophosphoryl-MurNAc-pentapeptide (lipid intermediate I) to form undecaprenyl-pyrophosphoryl-MurNAc-(pentapeptide)GlcNAc (lipid intermediate II). This is UDP-N-acetylglucosamine--N-acetylmuramyl-(pentapeptide) pyrophosphoryl-undecaprenol N-acetylglucosamine transferase from Francisella tularensis subsp. tularensis (strain FSC 198).